The following is a 229-amino-acid chain: Cytidylate kinase (229 aa).

12–20 (GPSGSGKGT) contacts ATP.

It belongs to the cytidylate kinase family. Type 1 subfamily.

Its subcellular location is the cytoplasm. It carries out the reaction CMP + ATP = CDP + ADP. The enzyme catalyses dCMP + ATP = dCDP + ADP. This Pseudomonas syringae pv. syringae (strain B728a) protein is Cytidylate kinase.